A 356-amino-acid chain; its full sequence is Dual-specificity RNA methyltransferase RlmN (356 aa).

Catalysis depends on E95, which acts as the Proton acceptor. The Radical SAM core domain occupies 101–332 (EDERGTLCIS…VTVIRDRRGE (232 aa)). C108 and C338 form a disulfide bridge. The [4Fe-4S] cluster site is built by C115, C119, and C122. S-adenosyl-L-methionine-binding positions include 165-166 (GE), S197, 219-221 (SLH), and N295. C338 (S-methylcysteine intermediate) is an active-site residue.

It belongs to the radical SAM superfamily. RlmN family. It depends on [4Fe-4S] cluster as a cofactor.

It is found in the cytoplasm. It catalyses the reaction adenosine(2503) in 23S rRNA + 2 reduced [2Fe-2S]-[ferredoxin] + 2 S-adenosyl-L-methionine = 2-methyladenosine(2503) in 23S rRNA + 5'-deoxyadenosine + L-methionine + 2 oxidized [2Fe-2S]-[ferredoxin] + S-adenosyl-L-homocysteine. It carries out the reaction adenosine(37) in tRNA + 2 reduced [2Fe-2S]-[ferredoxin] + 2 S-adenosyl-L-methionine = 2-methyladenosine(37) in tRNA + 5'-deoxyadenosine + L-methionine + 2 oxidized [2Fe-2S]-[ferredoxin] + S-adenosyl-L-homocysteine. Its function is as follows. Specifically methylates position 2 of adenine 2503 in 23S rRNA and position 2 of adenine 37 in tRNAs. m2A2503 modification seems to play a crucial role in the proofreading step occurring at the peptidyl transferase center and thus would serve to optimize ribosomal fidelity. The protein is Dual-specificity RNA methyltransferase RlmN of Magnetococcus marinus (strain ATCC BAA-1437 / JCM 17883 / MC-1).